The following is a 306-amino-acid chain: Glutaminase (306 aa).

Ser-64, Asn-115, Glu-159, Asn-166, Tyr-190, Tyr-242, and Val-260 together coordinate substrate.

This sequence belongs to the glutaminase family. In terms of assembly, homotetramer.

The catalysed reaction is L-glutamine + H2O = L-glutamate + NH4(+). The protein is Glutaminase of Vibrio cholerae serotype O1 (strain ATCC 39315 / El Tor Inaba N16961).